The sequence spans 873 residues: DNA mismatch repair protein MutS (873 aa).

620-627 (GPNMAGKS) contacts ATP.

It belongs to the DNA mismatch repair MutS family.

Its function is as follows. This protein is involved in the repair of mismatches in DNA. It is possible that it carries out the mismatch recognition step. This protein has a weak ATPase activity. This chain is DNA mismatch repair protein MutS, found in Ruminiclostridium cellulolyticum (strain ATCC 35319 / DSM 5812 / JCM 6584 / H10) (Clostridium cellulolyticum).